The primary structure comprises 527 residues: Cytochrome P450 714B3 (527 aa).

The Lumenal portion of the chain corresponds to 1-14 (MEVAMAMAVKVLLS). Residues 15 to 35 (LCCVGACGLAVYLYHILWLVP) form a helical; Signal-anchor for type III membrane protein membrane-spanning segment. Topologically, residues 36 to 527 (QKVLAKFEDQ…SVCTKRGTAI (492 aa)) are cytoplasmic. Cys464 lines the heme pocket.

It belongs to the cytochrome P450 family. Heme is required as a cofactor.

The protein resides in the membrane. Functionally, may be involved in gibberellin metabolism. The polypeptide is Cytochrome P450 714B3 (CYP714B3) (Zea mays (Maize)).